The following is a 355-amino-acid chain: Tetraacyldisaccharide 4'-kinase (355 aa).

48 to 55 (SVGGTGKT) contributes to the ATP binding site.

Belongs to the LpxK family.

It catalyses the reaction a lipid A disaccharide + ATP = a lipid IVA + ADP + H(+). It participates in glycolipid biosynthesis; lipid IV(A) biosynthesis; lipid IV(A) from (3R)-3-hydroxytetradecanoyl-[acyl-carrier-protein] and UDP-N-acetyl-alpha-D-glucosamine: step 6/6. Functionally, transfers the gamma-phosphate of ATP to the 4'-position of a tetraacyldisaccharide 1-phosphate intermediate (termed DS-1-P) to form tetraacyldisaccharide 1,4'-bis-phosphate (lipid IVA). The protein is Tetraacyldisaccharide 4'-kinase of Pelodictyon phaeoclathratiforme (strain DSM 5477 / BU-1).